Here is a 247-residue protein sequence, read N- to C-terminus: ATP synthase subunit a, chloroplastic (247 aa).

5 consecutive transmembrane segments (helical) span residues 38–58, 95–115, 134–154, 199–219, and 220–240; these read QVLI…TLAV, VPFI…GALL, INTT…AGLT, LVVV…VMFL, and GLFT…AYIG.

It belongs to the ATPase A chain family. As to quaternary structure, F-type ATPases have 2 components, CF(1) - the catalytic core - and CF(0) - the membrane proton channel. CF(1) has five subunits: alpha(3), beta(3), gamma(1), delta(1), epsilon(1). CF(0) has four main subunits: a, b, b' and c.

The protein localises to the plastid. It is found in the chloroplast thylakoid membrane. Its function is as follows. Key component of the proton channel; it plays a direct role in the translocation of protons across the membrane. This is ATP synthase subunit a, chloroplastic from Jasminum nudiflorum (Winter jasmine).